The chain runs to 409 residues: Rho-GTPase-activating protein BAG7 (409 aa).

A compositionally biased stretch (polar residues) spans 1–26; that stretch reads MFNMNLLSTPSSEEGSPQNRSSSMSS. The segment at 1-32 is disordered; that stretch reads MFNMNLLSTPSSEEGSPQNRSSSMSSVEGKKD. One can recognise a Rho-GAP domain in the interval 50 to 257; that stretch reads VSLEESLKVA…FLILHASDII (208 aa). Residues 362–409 form a disordered region; sequence KLLGNVGNSSNTGIKDPTERVPRGEHKTKHKQRQSWLRRLTSPSRTQP. The segment covering 377 to 386 has biased composition (basic and acidic residues); that stretch reads DPTERVPRGE.

Interacts with RHO1.

Acts in signal transduction. Activates RHO1. The chain is Rho-GTPase-activating protein BAG7 (BAG7) from Saccharomyces cerevisiae (strain ATCC 204508 / S288c) (Baker's yeast).